Reading from the N-terminus, the 1101-residue chain is Leucine-rich repeat receptor-like serine/threonine-protein kinase At1g17230 (1101 aa).

The signal sequence occupies residues 1–23 (MRGRICFLAIVILCSFSFILVRS). Topologically, residues 24 to 734 (LNEEGRVLLE…WLINGSQRQK (711 aa)) are extracellular. 4 N-linked (GlcNAc...) asparagine glycosylation sites follow: asparagine 39, asparagine 57, asparagine 78, and asparagine 97. LRR repeat units follow at residues 66–90 (LRTV…ICKL), 91–115 (HGLR…SLCR), 117–137 (LEVL…QLTM), 138–162 (IITL…IGNL), 163–186 (SSLQ…MAKL), 188–210 (QLRI…ISGC), 211–234 (ESLK…LEKL), 235–258 (QNLT…VGNI), 260–282 (RLEV…IGKL), 283–306 (TKMK…IGNL), 308–329 (DAAE…EFGH), 330–354 (ILNL…LGEL), 355–379 (TLLE…QFLP), 381–402 (LVDL…IGFY), 403–426 (SNFS…FCRF), 427–450 (QTLI…LKTC), 451–474 (KSLT…LFNL), 476–498 (NLTA…LGKL), 499–522 (KNLE…IGNL), 524–546 (KIVG…LGSC), 548–569 (TIQR…ELGQ), 570–593 (LVYL…SFGD), 595–618 (TRLM…LGKL), 619–643 (TSLQ…LGNL), 644–667 (QMLE…IGNL), and 669–692 (SLLI…VFQR). Asparagine 161 and asparagine 174 each carry an N-linked (GlcNAc...) asparagine glycan. N-linked (GlcNAc...) asparagine glycosylation is found at asparagine 236 and asparagine 257. Residue asparagine 368 is glycosylated (N-linked (GlcNAc...) asparagine). N-linked (GlcNAc...) asparagine glycosylation is present at asparagine 404. Residues asparagine 476, asparagine 490, asparagine 510, asparagine 521, and asparagine 529 are each glycosylated (N-linked (GlcNAc...) asparagine). Residues asparagine 626 and asparagine 631 are each glycosylated (N-linked (GlcNAc...) asparagine). Residues asparagine 674 and asparagine 728 are each glycosylated (N-linked (GlcNAc...) asparagine). A helical transmembrane segment spans residues 735–755 (ILTITCIVIGSVFLITFLGLC). Residues 756 to 1101 (WTIKRREPAF…LEEANSSKEI (346 aa)) lie on the Cytoplasmic side of the membrane. Phosphothreonine is present on residues threonine 788 and threonine 796. In terms of domain architecture, Protein kinase spans 799–1081 (FSEDVVLGRG…ITEARGSSSL (283 aa)). ATP is bound by residues 805–813 (LGRGACGTV) and lysine 827. Phosphotyrosine occurs at positions 874 and 913. The Proton acceptor role is filled by aspartate 926. Position 960 is a phosphoserine (serine 960). Tyrosine 968 and tyrosine 975 each carry phosphotyrosine. Threonine 976 carries the phosphothreonine modification. The interval 1076 to 1101 (RGSSSLSSSSITSETPLEEANSSKEI) is disordered. Residues 1078–1088 (SSSLSSSSITS) are compositionally biased toward low complexity.

Belongs to the protein kinase superfamily. Ser/Thr protein kinase family.

It localises to the cell membrane. The enzyme catalyses L-seryl-[protein] + ATP = O-phospho-L-seryl-[protein] + ADP + H(+). The catalysed reaction is L-threonyl-[protein] + ATP = O-phospho-L-threonyl-[protein] + ADP + H(+). The polypeptide is Leucine-rich repeat receptor-like serine/threonine-protein kinase At1g17230 (Arabidopsis thaliana (Mouse-ear cress)).